The following is a 141-amino-acid chain: Large ribosomal subunit protein uL11 (141 aa).

This sequence belongs to the universal ribosomal protein uL11 family. As to quaternary structure, part of the ribosomal stalk of the 50S ribosomal subunit. Interacts with L10 and the large rRNA to form the base of the stalk. L10 forms an elongated spine to which L12 dimers bind in a sequential fashion forming a multimeric L10(L12)X complex. Post-translationally, one or more lysine residues are methylated.

Forms part of the ribosomal stalk which helps the ribosome interact with GTP-bound translation factors. The chain is Large ribosomal subunit protein uL11 from Chlamydia muridarum (strain MoPn / Nigg).